Reading from the N-terminus, the 440-residue chain is MSNQGAFDGAANVESGSRVFVYEVVGMRQNEETDQTNYPIRKSGSVFIRVPYNRMNQEMQRITRLGGKIVSIQTVSALQQLNGRTTIATVTDASSEIAKSEGNGKATPVKTDSGAKGFAKPPAEEQLKKKDNKGNTMTQAKAKHADVPVNLYRPNAPFIGKVISNEPLVKEGGIGIVQHIKFDLTGGNLKYIEGQSIGIIPPGVDKNGKPEKLRLYSIASTRHGDDVDDKTISLCVRQLEYKHPESGETVYGVCSTYLTHIEPGSEVKITGPVGKEMLLPDDPEANVIMLATGTGIAPMRTYLWRMFKDAERAANPEYQFKGFSWLVFGVPTTPNILYKEELEEIQQKYPDNFRLTYAISREQKNPQGGRMYIQDRVAEHADELWQLIKNEKTHTYICGLRGMEEGIDAALSAAAAKEGVTWSDYQKDLKKAGRWHVETY.

Residues 17 to 75 (SRVFVYEVVGMRQNEETDQTNYPIRKSGSVFIRVPYNRMNQEMQRITRLGGKIVSIQTV) enclose the CpcD-like domain. The segment at 98–142 (AKSEGNGKATPVKTDSGAKGFAKPPAEEQLKKKDNKGNTMTQAKA) is disordered. Over residues 122-133 (PAEEQLKKKDNK) the composition is skewed to basic and acidic residues. Residues 155 to 279 (NAPFIGKVIS…TGPVGKEMLL (125 aa)) form the FAD-binding FR-type domain. FAD contacts are provided by residues 214-217 (RLYS), 235-237 (CVR), tyrosine 241, 253-255 (VCS), and threonine 294. Residues serine 217 and arginine 237 each coordinate NADP(+). NADP(+) is bound by residues threonine 294, 330–331 (VP), 360–361 (SR), 370–374 (RMYIQ), 399–400 (GL), and glutamate 438.

Belongs to the ferredoxin--NADP reductase type 1 family. Requires FAD as cofactor.

The protein localises to the cellular thylakoid membrane. The catalysed reaction is 2 reduced [2Fe-2S]-[ferredoxin] + NADP(+) + H(+) = 2 oxidized [2Fe-2S]-[ferredoxin] + NADPH. This Nostoc sp. (strain PCC 7120 / SAG 25.82 / UTEX 2576) protein is Ferredoxin--NADP reductase (petH).